Here is a 359-residue protein sequence, read N- to C-terminus: Photosystem II protein D1 2 (359 aa).

3 consecutive transmembrane segments (helical) span residues 29 to 46 (YVGW…AATT), 118 to 133 (HFLI…EWEL), and 142 to 156 (WICV…AASA). Residue His118 participates in chlorophyll a binding. A pheophytin a-binding site is contributed by Tyr126. The [CaMn4O5] cluster site is built by Asp170 and Glu189. A helical transmembrane segment spans residues 197–218 (FHMLGVAGVFGGSLFSAMHGSL). Chlorophyll a is bound at residue His198. Residues His215 and 264 to 265 (SF) each bind a quinone. His215 provides a ligand contact to Fe cation. Fe cation is bound at residue His272. The helical transmembrane segment at 274–288 (FLAAWPVVGIWFTAL) threads the bilayer. Positions 332, 333, 342, and 344 each coordinate [CaMn4O5] cluster. Positions 345–359 (AAESTPVALQAPAIG) are excised as a propeptide.

Belongs to the reaction center PufL/M/PsbA/D family. In terms of assembly, PSII is composed of 1 copy each of membrane proteins PsbA, PsbB, PsbC, PsbD, PsbE, PsbF, PsbH, PsbI, PsbJ, PsbK, PsbL, PsbM, PsbT, PsbX, PsbY, PsbZ, Psb30/Ycf12, peripheral proteins PsbO, CyanoQ (PsbQ), PsbU, PsbV and a large number of cofactors. It forms dimeric complexes. The D1/D2 heterodimer binds P680, chlorophylls that are the primary electron donor of PSII, and subsequent electron acceptors. It shares a non-heme iron and each subunit binds pheophytin, quinone, additional chlorophylls, carotenoids and lipids. D1 provides most of the ligands for the Mn4-Ca-O5 cluster of the oxygen-evolving complex (OEC). There is also a Cl(-1) ion associated with D1 and D2, which is required for oxygen evolution. The PSII complex binds additional chlorophylls, carotenoids and specific lipids. serves as cofactor. Tyr-161 forms a radical intermediate that is referred to as redox-active TyrZ, YZ or Y-Z. Post-translationally, C-terminally processed by CtpA; processing is essential to allow assembly of the oxygen-evolving complex and thus photosynthetic growth.

The protein localises to the cellular thylakoid membrane. The enzyme catalyses 2 a plastoquinone + 4 hnu + 2 H2O = 2 a plastoquinol + O2. Functionally, photosystem II (PSII) is a light-driven water:plastoquinone oxidoreductase that uses light energy to abstract electrons from H(2)O, generating O(2) and a proton gradient subsequently used for ATP formation. It consists of a core antenna complex that captures photons, and an electron transfer chain that converts photonic excitation into a charge separation. The D1/D2 (PsbA/PsbD) reaction center heterodimer binds P680, the primary electron donor of PSII as well as several subsequent electron acceptors. This is Photosystem II protein D1 2 from Synechococcus sp. (strain CC9311).